Here is a 210-residue protein sequence, read N- to C-terminus: Thymidylate kinase (210 aa).

D17 contributes to the dGMP binding site. Residue D17 participates in dTMP binding. R18, S19, G20, K21, S22, and T23 together coordinate ATP. R47, F74, R78, R99, and Y107 together coordinate dTMP. DGMP-binding residues include F74, R78, R99, Y107, S108, and Y153. The LID stretch occupies residues 143 to 155 (QNRSDYGEEIYEK). An ATP-binding site is contributed by R182.

It belongs to the thymidylate kinase family. In terms of assembly, homodimer. Binds two dTMP molecules per dimer. Binds only one dTGP molecule per dimer.

The catalysed reaction is dTMP + ATP = dTDP + ADP. It carries out the reaction dGMP + ATP = dGDP + ADP. It participates in pyrimidine metabolism; dTTP biosynthesis. With respect to regulation, inhibited by deoxyguanosine (dG), deoxythymidine (dT) and azidothymidine (AZT). Catalyzes the phosphorylation of thymidine monophosphate (dTMP) to thymidine diphosphate (dTDP), the immediate precursor for the DNA building block dTTP. Can also phosphorylate dGMP and to a lesser extent GMP, dUMP and dIMP. Can use either ATP or dATP as phosphate donors in presence of Mg(2+). This is Thymidylate kinase from Plasmodium falciparum (isolate 3D7).